The sequence spans 523 residues: Rho guanine nucleotide exchange factor 8 (523 aa).

Over residues 44–57 (VESNTPESQNSDSF) the composition is skewed to polar residues. Disordered regions lie at residues 44-83 (VESN…ERQQ) and 442-523 (ETSD…KDRH). Positions 76-440 (GKRSERQQAD…TLALKQTLLA (365 aa)) constitute a PRONE domain. Basic and acidic residues predominate over residues 465-475 (EAEKHDPHSKT).

In terms of assembly, homodimer. The homodimer interacts with ARAC5/ROP4. Interacts with ARAC11/ROP1 and ARAC10/ROP11. Interacts with PRK6. Expressed in pollen grains and pollen tubes.

It is found in the cell membrane. Functionally, guanine-nucleotide exchange factor (GEF) that acts as an activator of Rop (Rho of plants) GTPases by promoting the exchange of GDP for GTP. Active as homodimer. The polypeptide is Rho guanine nucleotide exchange factor 8 (Arabidopsis thaliana (Mouse-ear cress)).